Consider the following 396-residue polypeptide: DNA polymerase IV (396 aa).

Positions 5-192 (IFHVDVNSAF…LPVGELFMVG (188 aa)) constitute a UmuC domain. 2 residues coordinate Mg(2+): Asp-9 and Asp-111. Residue Glu-112 is part of the active site.

It belongs to the DNA polymerase type-Y family. Monomer. Mg(2+) serves as cofactor.

The protein resides in the cytoplasm. The catalysed reaction is DNA(n) + a 2'-deoxyribonucleoside 5'-triphosphate = DNA(n+1) + diphosphate. Functionally, poorly processive, error-prone DNA polymerase involved in untargeted mutagenesis. Copies undamaged DNA at stalled replication forks, which arise in vivo from mismatched or misaligned primer ends. These misaligned primers can be extended by PolIV. Exhibits no 3'-5' exonuclease (proofreading) activity. May be involved in translesional synthesis, in conjunction with the beta clamp from PolIII. This chain is DNA polymerase IV, found in Clostridium acetobutylicum (strain ATCC 824 / DSM 792 / JCM 1419 / IAM 19013 / LMG 5710 / NBRC 13948 / NRRL B-527 / VKM B-1787 / 2291 / W).